Here is a 611-residue protein sequence, read N- to C-terminus: Leukotriene A-4 hydrolase (611 aa).

Position 73 is an N6-acetyllysine (Lys73). A peptide-binding positions include 135–137 and 267–272; these read QCQ and SYGGME. His296 provides a ligand contact to Zn(2+). Residue Glu297 is the Proton acceptor of the active site. The Zn(2+) site is built by His300 and Glu319. Lys337 is modified (N6-acetyllysine). Tyr384 serves as the catalytic Proton donor. Lys414 carries the post-translational modification N6-acetyllysine. Ser416 carries the post-translational modification Phosphoserine. 564–566 lines the a peptide pocket; it reads RMK. An N6-acetyllysine modification is found at Lys573.

It belongs to the peptidase M1 family. Monomer. Requires Zn(2+) as cofactor. Phosphorylation at Ser-416 inhibits leukotriene-A4 hydrolase activity. activity.

The protein localises to the cytoplasm. It catalyses the reaction leukotriene A4 + H2O = leukotriene B4. The enzyme catalyses (5S,6S)-epoxy-(18R)-hydroxy-(7E,9E,11Z,14Z,16E)-eicosapentaenoate + H2O = resolvin E1. It carries out the reaction (5S,6S)-epoxy-(18S)-hydroxy-(7E,9E,11Z,14Z,16E)-eicosapentaenoate + H2O = 18S-resolvin E1. The catalysed reaction is Release of the N-terminal residue from a tripeptide.. Its pathway is lipid metabolism; leukotriene B4 biosynthesis. With respect to regulation, inhibited by bestatin. The epoxide hydrolase activity is restrained by suicide inactivation that involves binding of LTA4 to Tyr-379. 4-(4-benzylphenyl)thiazol-2-amine (ARM1) selectively inhibits the epoxide hydrolase activity. In terms of biological role, bifunctional zinc metalloenzyme that comprises both epoxide hydrolase (EH) and aminopeptidase activities. Acts as an epoxide hydrolase to catalyze the conversion of LTA4 to the pro-inflammatory mediator leukotriene B4 (LTB4). Also has aminopeptidase activity, with high affinity for N-terminal arginines of various synthetic tripeptides. In addition to its pro-inflammatory EH activity, may also counteract inflammation by its aminopeptidase activity, which inactivates by cleavage another neutrophil attractant, the tripeptide Pro-Gly-Pro (PGP), a bioactive fragment of collagen generated by the action of matrix metalloproteinase-9 (MMP9) and prolylendopeptidase (PREPL). Involved also in the biosynthesis of resolvin E1 and 18S-resolvin E1 from eicosapentaenoic acid, two lipid mediators that show potent anti-inflammatory and pro-resolving actions. This chain is Leukotriene A-4 hydrolase (LTA4H), found in Cavia porcellus (Guinea pig).